A 256-amino-acid chain; its full sequence is Hydroxyacylglutathione hydrolase (256 aa).

Zn(2+) contacts are provided by histidine 57, histidine 59, aspartate 61, histidine 62, histidine 115, aspartate 134, and histidine 172.

This sequence belongs to the metallo-beta-lactamase superfamily. Glyoxalase II family. Monomer. The cofactor is Zn(2+).

The catalysed reaction is an S-(2-hydroxyacyl)glutathione + H2O = a 2-hydroxy carboxylate + glutathione + H(+). It participates in secondary metabolite metabolism; methylglyoxal degradation; (R)-lactate from methylglyoxal: step 2/2. In terms of biological role, thiolesterase that catalyzes the hydrolysis of S-D-lactoyl-glutathione to form glutathione and D-lactic acid. The protein is Hydroxyacylglutathione hydrolase of Rhizobium meliloti (strain 1021) (Ensifer meliloti).